A 153-amino-acid chain; its full sequence is MVVKAVCVINGDAKGTVFFEQEDNGAPVKVTGEVTGLGKGLHGFHVHEFGDNTNGCMSSGPHFNPHSKEHGAPGDENRHLGDLGNIEASGSGPTAVNITDSKITLVGANSIIGRTVVVHADPDDLGKGGHELSKTTGNAGARIGCGVIGIAKI.

Cu cation is bound by residues His45, His47, and His62. Cysteines 56 and 145 form a disulfide. Residues His62, His70, His79, and Asp82 each contribute to the Zn(2+) site. A Cu cation-binding site is contributed by His119.

Belongs to the Cu-Zn superoxide dismutase family. In terms of assembly, homodimer. Cu cation is required as a cofactor. Zn(2+) serves as cofactor.

The protein resides in the cytoplasm. The catalysed reaction is 2 superoxide + 2 H(+) = H2O2 + O2. Functionally, destroys radicals which are normally produced within the cells and which are toxic to biological systems. This Drosophila willistoni (Fruit fly) protein is Superoxide dismutase [Cu-Zn].